The following is a 252-amino-acid chain: tRNA pseudouridine synthase A (252 aa).

Catalysis depends on Asp52, which acts as the Nucleophile. Tyr111 lines the substrate pocket.

The protein belongs to the tRNA pseudouridine synthase TruA family. Homodimer.

It catalyses the reaction uridine(38/39/40) in tRNA = pseudouridine(38/39/40) in tRNA. Its function is as follows. Formation of pseudouridine at positions 38, 39 and 40 in the anticodon stem and loop of transfer RNAs. In Parabacteroides distasonis (strain ATCC 8503 / DSM 20701 / CIP 104284 / JCM 5825 / NCTC 11152), this protein is tRNA pseudouridine synthase A.